Here is a 991-residue protein sequence, read N- to C-terminus: Valine--tRNA ligase (991 aa).

The 'HIGH' region motif lies at 43-53; that stretch reads PNVTGTLHMGH. The 'KMSKS' region motif lies at 582–586; that stretch reads KMSKS. Lys-585 serves as a coordination point for ATP. The disordered stretch occupies residues 689–711; the sequence is AHSPAQHQAGQDGQDAPRTPQPR. Over residues 693 to 704 the composition is skewed to low complexity; it reads AQHQAGQDGQDA. A coiled-coil region spans residues 925–988; the sequence is LIDVDAERAR…TQLNGLRERR (64 aa).

It belongs to the class-I aminoacyl-tRNA synthetase family. ValS type 1 subfamily. In terms of assembly, monomer.

Its subcellular location is the cytoplasm. The catalysed reaction is tRNA(Val) + L-valine + ATP = L-valyl-tRNA(Val) + AMP + diphosphate. In terms of biological role, catalyzes the attachment of valine to tRNA(Val). As ValRS can inadvertently accommodate and process structurally similar amino acids such as threonine, to avoid such errors, it has a 'posttransfer' editing activity that hydrolyzes mischarged Thr-tRNA(Val) in a tRNA-dependent manner. The chain is Valine--tRNA ligase from Xylella fastidiosa (strain M12).